Here is a 428-residue protein sequence, read N- to C-terminus: D-amino acid dehydrogenase (428 aa).

3–17 lines the FAD pocket; sequence VVILGSGVVGVASAY.

Belongs to the DadA oxidoreductase family. The cofactor is FAD.

The catalysed reaction is a D-alpha-amino acid + A + H2O = a 2-oxocarboxylate + AH2 + NH4(+). It functions in the pathway amino-acid degradation; D-alanine degradation; NH(3) and pyruvate from D-alanine: step 1/1. Functionally, oxidative deamination of D-amino acids. The chain is D-amino acid dehydrogenase from Burkholderia pseudomallei (strain 1106a).